The primary structure comprises 263 residues: Chaperone protein ClpE (263 aa).

Positions Met-1–Ala-34 are cleaved as a signal peptide. The segment covering Gln-238 to Asn-255 has biased composition (polar residues). The tract at residues Gln-238–Lys-263 is disordered.

It belongs to the periplasmic pilus chaperone family.

The protein localises to the periplasm. Functionally, involved in the biogenesis of the CS31A capsule-like antigen. The polypeptide is Chaperone protein ClpE (clpE) (Escherichia coli).